Reading from the N-terminus, the 577-residue chain is Proline--tRNA ligase (577 aa).

Belongs to the class-II aminoacyl-tRNA synthetase family. ProS type 1 subfamily. As to quaternary structure, homodimer.

The protein resides in the cytoplasm. The enzyme catalyses tRNA(Pro) + L-proline + ATP = L-prolyl-tRNA(Pro) + AMP + diphosphate. In terms of biological role, catalyzes the attachment of proline to tRNA(Pro) in a two-step reaction: proline is first activated by ATP to form Pro-AMP and then transferred to the acceptor end of tRNA(Pro). As ProRS can inadvertently accommodate and process non-cognate amino acids such as alanine and cysteine, to avoid such errors it has two additional distinct editing activities against alanine. One activity is designated as 'pretransfer' editing and involves the tRNA(Pro)-independent hydrolysis of activated Ala-AMP. The other activity is designated 'posttransfer' editing and involves deacylation of mischarged Ala-tRNA(Pro). The misacylated Cys-tRNA(Pro) is not edited by ProRS. The polypeptide is Proline--tRNA ligase (Thermotoga neapolitana (strain ATCC 49049 / DSM 4359 / NBRC 107923 / NS-E)).